A 196-amino-acid polypeptide reads, in one-letter code: Chorion protein S19 (196 aa).

An N-terminal signal peptide occupies residues 1 to 16; that stretch reads MNTFATLAIFISACLA.

Belongs to the chorion protein S19 family.

It localises to the secreted. In terms of biological role, chorion membrane (egg shell) protein; plays a role in protecting the egg from the environment. The sequence is that of Chorion protein S19 (Cp19) from Drosophila grimshawi (Hawaiian fruit fly).